We begin with the raw amino-acid sequence, 655 residues long: Probable replication restart protein PriA (655 aa).

8 residues coordinate Zn(2+): Cys368, Cys371, Cys377, Cys380, Cys396, Cys399, Cys408, and Cys411.

It belongs to the helicase family. PriA subfamily. Component of the replication restart primosome. Zn(2+) is required as a cofactor.

Its function is as follows. Initiates the restart of stalled replication forks, which reloads the replicative helicase on sites other than the origin of replication. Recognizes and binds to abandoned replication forks and remodels them to uncover a helicase loading site. Promotes assembly of the primosome at these replication forks. In Mycobacterium bovis (strain ATCC BAA-935 / AF2122/97), this protein is Probable replication restart protein PriA.